The primary structure comprises 272 residues: Putative pyruvate, phosphate dikinase regulatory protein 1 (272 aa).

ADP is bound at residue 151 to 158; that stretch reads GISRTSKT.

This sequence belongs to the pyruvate, phosphate/water dikinase regulatory protein family. PDRP subfamily.

It catalyses the reaction N(tele)-phospho-L-histidyl/L-threonyl-[pyruvate, phosphate dikinase] + ADP = N(tele)-phospho-L-histidyl/O-phospho-L-threonyl-[pyruvate, phosphate dikinase] + AMP + H(+). The catalysed reaction is N(tele)-phospho-L-histidyl/O-phospho-L-threonyl-[pyruvate, phosphate dikinase] + phosphate + H(+) = N(tele)-phospho-L-histidyl/L-threonyl-[pyruvate, phosphate dikinase] + diphosphate. Functionally, bifunctional serine/threonine kinase and phosphorylase involved in the regulation of the pyruvate, phosphate dikinase (PPDK) by catalyzing its phosphorylation/dephosphorylation. The protein is Putative pyruvate, phosphate dikinase regulatory protein 1 of Staphylococcus epidermidis (strain ATCC 35984 / DSM 28319 / BCRC 17069 / CCUG 31568 / BM 3577 / RP62A).